The primary structure comprises 1440 residues: Pentatricopeptide repeat-containing protein At3g18110, chloroplastic (1440 aa).

Residues 1 to 44 (MAVSAGALAFPALSVRATLNPEIKDEQANISSTTSSSQKFTYSR) constitute a chloroplast transit peptide. The segment covering 63–72 (TPSQTLSSPV) has biased composition (polar residues). The interval 63–84 (TPSQTLSSPVSPIAGTPDSGDV) is disordered. 25 PPR repeats span residues 224–258 (RVQV…GCVP), 259–295 (DLIS…GLRP), 296–330 (DAIT…RCQP), 331–365 (DLWT…GFFP), 366–400 (DAVT…GFGK), 401–431 (DEMT…MKGL), 437–471 (DAIT…GIKP), 472–506 (TLQT…GTKP), 507–541 (DNLA…GHTP), 542–572 (SYTL…MEEL), 608–638 (ENDT…LKEH), 643–678 (KRLI…GWCF), 680–714 (SSTM…GCEA), 715–749 (SESV…GFHF), 751–785 (CSPM…GRTP), 786–820 (DLKT…GPSP), 821–855 (TVES…GFKI), 856–890 (SKSS…GYLP), 891–925 (TIRL…NFKV), 926–960 (ELAI…GLEP), 961–995 (DETT…GLDP), 996–1030 (KLDT…GLKL), 1031–1065 (DRSF…GIEP), 1066–1100 (TLAT…EVEL), and 1101–1135 (TTLP…GLEP). Positions 1419–1440 (KKKKMGNETNGINTRRKFVRSK) are disordered.

It belongs to the PPR family. P subfamily.

The protein localises to the plastid. It is found in the chloroplast. Its function is as follows. May play a role in embryogenesis. In Arabidopsis thaliana (Mouse-ear cress), this protein is Pentatricopeptide repeat-containing protein At3g18110, chloroplastic (EMB1270).